The sequence spans 39 residues: Photosystem II reaction center protein Psb30 (39 aa).

A helical transmembrane segment spans residues 12–32 (IFQLTFVGLIMVAGPVVIFLL).

It belongs to the Psb30/Ycf12 family. PSII is composed of 1 copy each of membrane proteins PsbA, PsbB, PsbC, PsbD, PsbE, PsbF, PsbH, PsbI, PsbJ, PsbK, PsbL, PsbM, PsbT, PsbX, PsbY, PsbZ, Psb30/Ycf12, peripheral proteins PsbO, CyanoQ (PsbQ), PsbU, PsbV and a large number of cofactors. It forms dimeric complexes.

The protein localises to the cellular thylakoid membrane. A core subunit of photosystem II (PSII), probably helps stabilize the reaction center. The polypeptide is Photosystem II reaction center protein Psb30 (Rippkaea orientalis (strain PCC 8801 / RF-1) (Cyanothece sp. (strain PCC 8801))).